The chain runs to 156 residues: Ribosomal RNA large subunit methyltransferase H (156 aa).

Residues leucine 73, glycine 104, and 123–128 contribute to the S-adenosyl-L-methionine site; that span reads IGPLTL.

This sequence belongs to the RNA methyltransferase RlmH family. Homodimer.

It localises to the cytoplasm. The enzyme catalyses pseudouridine(1915) in 23S rRNA + S-adenosyl-L-methionine = N(3)-methylpseudouridine(1915) in 23S rRNA + S-adenosyl-L-homocysteine + H(+). Functionally, specifically methylates the pseudouridine at position 1915 (m3Psi1915) in 23S rRNA. This chain is Ribosomal RNA large subunit methyltransferase H, found in Stenotrophomonas maltophilia (strain K279a).